A 297-amino-acid polypeptide reads, in one-letter code: 1D-myo-inositol 2-acetamido-2-deoxy-alpha-D-glucopyranoside deacetylase (297 aa).

Residues H14, D17, and H149 each coordinate Zn(2+).

The protein belongs to the MshB deacetylase family. It depends on Zn(2+) as a cofactor.

It carries out the reaction 1D-myo-inositol 2-acetamido-2-deoxy-alpha-D-glucopyranoside + H2O = 1D-myo-inositol 2-amino-2-deoxy-alpha-D-glucopyranoside + acetate. Catalyzes the deacetylation of 1D-myo-inositol 2-acetamido-2-deoxy-alpha-D-glucopyranoside (GlcNAc-Ins) in the mycothiol biosynthesis pathway. This is 1D-myo-inositol 2-acetamido-2-deoxy-alpha-D-glucopyranoside deacetylase from Thermomonospora curvata (strain ATCC 19995 / DSM 43183 / JCM 3096 / KCTC 9072 / NBRC 15933 / NCIMB 10081 / Henssen B9).